Consider the following 471-residue polypeptide: Chromosomal replication initiator protein DnaA (471 aa).

The segment at 1–77 is domain I, interacts with DnaA modulators; the sequence is MELNSSFWTL…YTEISDTYGK (77 aa). The tract at residues 77 to 130 is domain II; it reads KPFEVEFSITGNKINSHIETSTTPDEVLSGSEILQAQLARAQNIQPTQPRSSSD. Residues 131–349 form a domain III, AAA+ region region; that stretch reads TLNSELTFST…GNLKKVKMFS (219 aa). Residues Gly-176, Gly-178, Lys-179, and Thr-180 each contribute to the ATP site. Residues 350–471 form a domain IV, binds dsDNA region; sequence ELQGLPIDHE…EQRIHNITRV (122 aa).

Belongs to the DnaA family. As to quaternary structure, oligomerizes as a right-handed, spiral filament on DNA at oriC.

It localises to the cytoplasm. Plays an essential role in the initiation and regulation of chromosomal replication. ATP-DnaA binds to the origin of replication (oriC) to initiate formation of the DNA replication initiation complex once per cell cycle. Binds the DnaA box (a 9 base pair repeat at the origin) and separates the double-stranded (ds)DNA. Forms a right-handed helical filament on oriC DNA; dsDNA binds to the exterior of the filament while single-stranded (ss)DNA is stabiized in the filament's interior. The ATP-DnaA-oriC complex binds and stabilizes one strand of the AT-rich DNA unwinding element (DUE), permitting loading of DNA polymerase. After initiation quickly degrades to an ADP-DnaA complex that is not apt for DNA replication. Binds acidic phospholipids. In Bdellovibrio bacteriovorus (strain ATCC 15356 / DSM 50701 / NCIMB 9529 / HD100), this protein is Chromosomal replication initiator protein DnaA.